A 497-amino-acid chain; its full sequence is Penton protein (497 aa).

A Cell attachment site motif is present at residues 293-295 (RGD).

Belongs to the adenoviridae penton family. As to quaternary structure, interacts (via the cell attachment site RGD) with host heterodimer ITGAV-ITGB5; this interaction promotes virus internalization. Interacts with host WWP1 and WWP2. Interacts with the fiber protein (via N-terminal tail region). Interacts with the capsid vertex protein; this interaction binds the penton base to neighboring peripentonal hexons.

The protein resides in the virion. It localises to the host nucleus. Its function is as follows. Major capsid protein that self-associates to form penton base pentamers, each in the shape of a pentagon, situated at the 12 vertices of the pseudo T=25 capsid. Involved in virus secondary attachment to host cell after initial attachment by the fiber protein. Binds host integrin heterodimer ITGAV-ITGB5 (alphaV-beta5) thereby triggering clathrin-mediated endocytosis of virions. Mediates initial virus attachment to CXADR-negative cells. Binding to integrins ITGAV-ITGB5 also seems to induce macropinocytosis uptake of the virus. As the virus enters the host cell, penton proteins are shed concomitant with virion acidification in the endosome. The sequence is that of Penton protein from Human adenovirus A serotype 12 (HAdV-12).